Consider the following 200-residue polypeptide: uncharacterized protein (200 aa).

Residues 1–24 (MAIDKLPLLLFLSILLCLNRPVLS) form the signal peptide. N-linked (GlcNAc...) asparagine glycosylation is found at asparagine 44, asparagine 72, asparagine 99, asparagine 124, and asparagine 135. Serine 174 carries GPI-anchor amidated serine lipidation. A propeptide spans 175–200 (NGFTFGIGLVSYLVIFMYSSFCFFLF) (removed in mature form).

The protein belongs to the UPF0277 family.

It localises to the cell membrane. This is an uncharacterized protein from Arabidopsis thaliana (Mouse-ear cress).